We begin with the raw amino-acid sequence, 802 residues long: ATP-dependent zinc metalloprotease FTSH 3, mitochondrial (802 aa).

Residues 1-21 (MSLSSLSRALARSARSSRQRQ) constitute a mitochondrion transit peptide. The span at 1–23 (MSLSSLSRALARSARSSRQRQGS) shows a compositional bias: low complexity. Disordered regions lie at residues 1–33 (MSLSSLSRALARSARSSRQRQGSLLGGHGGLRA) and 85–120 (DKSKKNHGKHSEEENKGKGDESDKSDSKKQSSSGDQ). Basic and acidic residues predominate over residues 85 to 113 (DKSKKNHGKHSEEENKGKGDESDKSDSKK). Residues 133-153 (MIAPLFLFGLLLLSASASSSE) traverse the membrane as a helical segment. 360-367 (GPPGTGKT) is an ATP binding site. Residue His-585 participates in Zn(2+) binding. The active site involves Glu-586. Positions 589 and 661 each coordinate Zn(2+). The segment at 773–802 (KQGFQDEDSNRNAELSNADGASSLGEAVAS) is disordered.

In the N-terminal section; belongs to the AAA ATPase family. The protein in the C-terminal section; belongs to the peptidase M41 family. Requires Zn(2+) as cofactor.

The protein localises to the mitochondrion inner membrane. Probable ATP-dependent zinc metallopeptidase. The polypeptide is ATP-dependent zinc metalloprotease FTSH 3, mitochondrial (FTSH3) (Oryza sativa subsp. japonica (Rice)).